Reading from the N-terminus, the 85-residue chain is Putative N.vectensis toxin 1 9 (85 aa).

Positions 1–20 (MASFKIVIVCLALLVAVASA) are cleaved as a signal peptide. The propeptide occupies 21–36 (RRRDMMSDDELDYHFS). 3 cysteine pairs are disulfide-bonded: Cys42–Cys82, Cys44–Cys72, and Cys65–Cys83.

The protein belongs to the sea anemone sodium channel inhibitory toxin family. Type II subfamily. In terms of tissue distribution, expressed in ectodermal glands and in clumps outside of the extodermal layer. Is not expressed in nematocytes. In adult female tissues, shows similar expression levels in mesenteries (gametes-producing tissue), tentacles, pharynx and physa.

Its subcellular location is the secreted. Binds to site 3 of voltage-gated sodium channels and inhibits the inactivation process. Is highly active on DmNav1/TipE (drosophila) and is only extremely weakly active on rat Nav1.4-beta-1/SCN4A-SCN1B, and on human Nav1.5-beta-1/SCN5A-beta-1. This reveals high specificity for arthropod over mammalian channels. In vivo, when released into the medium, this recombinant toxin induces impaired swimming, paralysis and death of the crustacean A.nauplii within several hours. Also causes paralysis of cherry shrimps immediately after injection at very low doses. Its effect on zebrafish (D.rerio) larvae is also rapid, since it induces tail twitching accompanied by impaired swimming after 20 minutes and complete paralysis within 45 minutes. It has also been observed to cause death of zebrafish larvae within 1 hour. The protein is Putative N.vectensis toxin 1 9 of Nematostella vectensis (Starlet sea anemone).